Reading from the N-terminus, the 1405-residue chain is Protein translocase subunit SecA (1405 aa).

The segment at Met1–Glu1099 is protein translocase subunit SecA. ATP is bound by residues Gln88, Gly106–Ser110, and Asp494. The interval Ser1100–Lys1405 is unknown.

Belongs to the SecA family. In terms of assembly, monomer and homodimer. Part of the essential Sec protein translocation apparatus which comprises SecA, SecYEG and auxiliary proteins SecDF. Other proteins may also be involved.

Its subcellular location is the cell membrane. It localises to the cytoplasm. The enzyme catalyses ATP + H2O + cellular proteinSide 1 = ADP + phosphate + cellular proteinSide 2.. Functionally, part of the Sec protein translocase complex. Interacts with the SecYEG preprotein conducting channel. Has a central role in coupling the hydrolysis of ATP to the transfer of proteins into and across the cell membrane, serving as an ATP-driven molecular motor driving the stepwise translocation of polypeptide chains across the membrane. This is Protein translocase subunit SecA from Malacoplasma penetrans (strain HF-2) (Mycoplasma penetrans).